Here is a 454-residue protein sequence, read N- to C-terminus: UPF0210 protein Blon_2054/BLIJ_2131 (454 aa).

Belongs to the UPF0210 family. In terms of assembly, homodimer.

This is UPF0210 protein Blon_2054/BLIJ_2131 from Bifidobacterium longum subsp. infantis (strain ATCC 15697 / DSM 20088 / JCM 1222 / NCTC 11817 / S12).